We begin with the raw amino-acid sequence, 81 residues long: Salivary thrombin inhibitor anophelin (81 aa).

The first 22 residues, 1–22 (MANKLFLISLLCVVLVAKIAQA), serve as a signal peptide directing secretion. The N-linked (GlcNAc...) asparagine glycan is linked to N45. The tract at residues 70 to 73 (DPGR) is blocks active site cleft of host thrombin in a reverse direction compared to substrates.

This sequence belongs to the anophelin family. Interacts with human F2 (thrombin); the interaction results in thrombin inhibition.

Its subcellular location is the secreted. Its function is as follows. Salivary protein with anticoagulant activity that inhibits host thrombin (F2). The protein is Salivary thrombin inhibitor anophelin of Anopheles darlingi (Mosquito).